The primary structure comprises 515 residues: Maturase K (515 aa).

Belongs to the intron maturase 2 family. MatK subfamily.

The protein localises to the plastid. It localises to the chloroplast. Its function is as follows. Usually encoded in the trnK tRNA gene intron. Probably assists in splicing its own and other chloroplast group II introns. The chain is Maturase K from Pinus pinea (Italian stone pine).